A 469-amino-acid polypeptide reads, in one-letter code: Ribulose bisphosphate carboxylase large chain (469 aa).

A propeptide spanning residues M1–S2 is cleaved from the precursor. P3 carries the post-translational modification N-acetylproline. K14 carries the N6,N6,N6-trimethyllysine modification. Substrate-binding residues include N123 and T173. The Proton acceptor role is filled by K175. K177 provides a ligand contact to substrate. Mg(2+) contacts are provided by K201, D203, and E204. K201 is subject to N6-carboxylysine. Catalysis depends on H294, which acts as the Proton acceptor. Substrate is bound by residues R295, H327, and S379.

This sequence belongs to the RuBisCO large chain family. Type I subfamily. As to quaternary structure, heterohexadecamer of 8 large chains and 8 small chains; disulfide-linked. The disulfide link is formed within the large subunit homodimers. It depends on Mg(2+) as a cofactor. The disulfide bond which can form in the large chain dimeric partners within the hexadecamer appears to be associated with oxidative stress and protein turnover.

The protein resides in the plastid. Its subcellular location is the chloroplast. It catalyses the reaction 2 (2R)-3-phosphoglycerate + 2 H(+) = D-ribulose 1,5-bisphosphate + CO2 + H2O. The catalysed reaction is D-ribulose 1,5-bisphosphate + O2 = 2-phosphoglycolate + (2R)-3-phosphoglycerate + 2 H(+). Functionally, ruBisCO catalyzes two reactions: the carboxylation of D-ribulose 1,5-bisphosphate, the primary event in carbon dioxide fixation, as well as the oxidative fragmentation of the pentose substrate in the photorespiration process. Both reactions occur simultaneously and in competition at the same active site. This is Ribulose bisphosphate carboxylase large chain from Atriplex patula (Common orache).